The following is a 357-amino-acid chain: Peptide chain release factor 1 (357 aa).

An N5-methylglutamine modification is found at Gln232. Positions 284–304 (AERAAERKGQIGSGDRSERIR) are enriched in basic and acidic residues. The disordered stretch occupies residues 284 to 308 (AERAAERKGQIGSGDRSERIRTYNY).

This sequence belongs to the prokaryotic/mitochondrial release factor family. In terms of processing, methylated by PrmC. Methylation increases the termination efficiency of RF1.

It is found in the cytoplasm. Peptide chain release factor 1 directs the termination of translation in response to the peptide chain termination codons UAG and UAA. In Maricaulis maris (strain MCS10) (Caulobacter maris), this protein is Peptide chain release factor 1.